The primary structure comprises 78 residues: DNA-directed RNA polymerase subunit omega (78 aa).

It belongs to the RNA polymerase subunit omega family. As to quaternary structure, in cyanobacteria the RNAP catalytic core is composed of 2 alpha, 1 beta, 1 beta', 1 gamma and 1 omega subunit. When a sigma factor is associated with the core the holoenzyme is formed, which can initiate transcription.

The enzyme catalyses RNA(n) + a ribonucleoside 5'-triphosphate = RNA(n+1) + diphosphate. Its function is as follows. Promotes RNA polymerase assembly. Latches the N- and C-terminal regions of the beta' subunit thereby facilitating its interaction with the beta and alpha subunits. This Prochlorococcus marinus (strain MIT 9515) protein is DNA-directed RNA polymerase subunit omega.